Consider the following 276-residue polypeptide: Large ribosomal subunit protein uL2 (276 aa).

Disordered stretches follow at residues 29-55 and 219-276; these read PEKS…RHRG and HVRG…RRTR. A compositionally biased stretch (basic residues) spans 259–276; sequence TRNKKKQSSKLIVRRRTR.

Belongs to the universal ribosomal protein uL2 family. Part of the 50S ribosomal subunit. Forms a bridge to the 30S subunit in the 70S ribosome.

In terms of biological role, one of the primary rRNA binding proteins. Required for association of the 30S and 50S subunits to form the 70S ribosome, for tRNA binding and peptide bond formation. It has been suggested to have peptidyltransferase activity; this is somewhat controversial. Makes several contacts with the 16S rRNA in the 70S ribosome. In Rippkaea orientalis (strain PCC 8801 / RF-1) (Cyanothece sp. (strain PCC 8801)), this protein is Large ribosomal subunit protein uL2.